A 171-amino-acid chain; its full sequence is 3-hydroxydecanoyl-[acyl-carrier-protein] dehydratase (171 aa).

H70 is a catalytic residue.

Belongs to the thioester dehydratase family. FabA subfamily. Homodimer.

Its subcellular location is the cytoplasm. It catalyses the reaction a (3R)-hydroxyacyl-[ACP] = a (2E)-enoyl-[ACP] + H2O. The catalysed reaction is (3R)-hydroxydecanoyl-[ACP] = (2E)-decenoyl-[ACP] + H2O. It carries out the reaction (2E)-decenoyl-[ACP] = (3Z)-decenoyl-[ACP]. It functions in the pathway lipid metabolism; fatty acid biosynthesis. Functionally, necessary for the introduction of cis unsaturation into fatty acids. Catalyzes the dehydration of (3R)-3-hydroxydecanoyl-ACP to E-(2)-decenoyl-ACP and then its isomerization to Z-(3)-decenoyl-ACP. Can catalyze the dehydratase reaction for beta-hydroxyacyl-ACPs with saturated chain lengths up to 16:0, being most active on intermediate chain length. This chain is 3-hydroxydecanoyl-[acyl-carrier-protein] dehydratase, found in Shewanella sp. (strain MR-4).